Here is a 426-residue protein sequence, read N- to C-terminus: Glutamate-1-semialdehyde 2,1-aminomutase 2 (426 aa).

N6-(pyridoxal phosphate)lysine is present on Lys265.

It belongs to the class-III pyridoxal-phosphate-dependent aminotransferase family. HemL subfamily. Homodimer. The cofactor is pyridoxal 5'-phosphate.

It localises to the cytoplasm. The catalysed reaction is (S)-4-amino-5-oxopentanoate = 5-aminolevulinate. It functions in the pathway porphyrin-containing compound metabolism; protoporphyrin-IX biosynthesis; 5-aminolevulinate from L-glutamyl-tRNA(Glu): step 2/2. This Lachnoclostridium phytofermentans (strain ATCC 700394 / DSM 18823 / ISDg) (Clostridium phytofermentans) protein is Glutamate-1-semialdehyde 2,1-aminomutase 2.